Consider the following 432-residue polypeptide: Serine--tRNA ligase (432 aa).

L-serine is bound at residue T235 to E237. Residue R266 to E268 participates in ATP binding. E289 serves as a coordination point for L-serine. Residue E353 to S356 coordinates ATP. Residue S388 coordinates L-serine.

The protein belongs to the class-II aminoacyl-tRNA synthetase family. Type-1 seryl-tRNA synthetase subfamily. Homodimer. The tRNA molecule binds across the dimer.

Its subcellular location is the cytoplasm. It carries out the reaction tRNA(Ser) + L-serine + ATP = L-seryl-tRNA(Ser) + AMP + diphosphate + H(+). The catalysed reaction is tRNA(Sec) + L-serine + ATP = L-seryl-tRNA(Sec) + AMP + diphosphate + H(+). Its pathway is aminoacyl-tRNA biosynthesis; selenocysteinyl-tRNA(Sec) biosynthesis; L-seryl-tRNA(Sec) from L-serine and tRNA(Sec): step 1/1. Its function is as follows. Catalyzes the attachment of serine to tRNA(Ser). Is also able to aminoacylate tRNA(Sec) with serine, to form the misacylated tRNA L-seryl-tRNA(Sec), which will be further converted into selenocysteinyl-tRNA(Sec). The polypeptide is Serine--tRNA ligase (Paraburkholderia phymatum (strain DSM 17167 / CIP 108236 / LMG 21445 / STM815) (Burkholderia phymatum)).